Here is a 366-residue protein sequence, read N- to C-terminus: Glycerol-3-phosphate dehydrogenase [NAD(+)], glycosomal (366 aa).

Residues 22 to 27, Phe-97, Lys-125, and Ala-157 contribute to the NAD(+) site; that span reads GSGAFG. Lys-125 contacts substrate. Lys-210 serves as the catalytic Proton acceptor. The NAD(+) site is built by Arg-274, Val-298, and Glu-300. 274–275 serves as a coordination point for substrate; that stretch reads RN. The short motif at 364 to 366 is the Microbody targeting signal element; that stretch reads SKL.

This sequence belongs to the NAD-dependent glycerol-3-phosphate dehydrogenase family. Homodimer.

Its subcellular location is the glycosome. It carries out the reaction sn-glycerol 3-phosphate + NAD(+) = dihydroxyacetone phosphate + NADH + H(+). This chain is Glycerol-3-phosphate dehydrogenase [NAD(+)], glycosomal (GPD), found in Leishmania mexicana.